Consider the following 617-residue polypeptide: Chaperone protein DnaK (617 aa).

Positions 579–617 (KAQQEAQQASGEAGSADARGPDETVVDADYEVVDDEKRK) are disordered. Residues 580–594 (AQQEAQQASGEAGSA) show a composition bias toward low complexity. A compositionally biased stretch (acidic residues) spans 602 to 617 (TVVDADYEVVDDEKRK).

The protein belongs to the heat shock protein 70 family.

Acts as a chaperone. The sequence is that of Chaperone protein DnaK from Methanosarcina acetivorans (strain ATCC 35395 / DSM 2834 / JCM 12185 / C2A).